The sequence spans 276 residues: MFVPFLIMLREGLEAALIVSLIASYLKRTQRGRWIGVMWIGVLLAAALCLGLGIFINETTGEFPQKEQELFEGIVAVIAVVILTWMVFWMRKVSRNVKVQLEQAVDSALQRGNHHGWALVMMVFFAVAREGLESVFFLLAAFQQDVGIWPPLGAMLGLATAVVLGFLLYWGGIRLNLGAFFKWTSLFILFVAAGLAAGAIRAFHEAGLWNHFQEIAFDMSAVLSTHSLFGTLMEGIFGYQEAPSVSEVAVWFIYLIPALVAFALPPRAGATASRSA.

Residue Met-1 is a topological domain, periplasmic. A helical transmembrane segment spans residues 2–22 (FVPFLIMLREGLEAALIVSLI). Residues 23–34 (ASYLKRTQRGRW) lie on the Cytoplasmic side of the membrane. Residues 35 to 55 (IGVMWIGVLLAAALCLGLGIF) traverse the membrane as a helical segment. At 56 to 69 (INETTGEFPQKEQE) the chain is on the periplasmic side. Residues 70–90 (LFEGIVAVIAVVILTWMVFWM) form a helical membrane-spanning segment. Residues 91–118 (RKVSRNVKVQLEQAVDSALQRGNHHGWA) are Cytoplasmic-facing. The helical transmembrane segment at 119–139 (LVMMVFFAVAREGLESVFFLL) threads the bilayer. The Periplasmic portion of the chain corresponds to 140-147 (AAFQQDVG). The chain crosses the membrane as a helical span at residues 148–168 (IWPPLGAMLGLATAVVLGFLL). Over 169–179 (YWGGIRLNLGA) the chain is Cytoplasmic. The chain crosses the membrane as a helical span at residues 180 to 200 (FFKWTSLFILFVAAGLAAGAI). The Periplasmic portion of the chain corresponds to 201-244 (RAFHEAGLWNHFQEIAFDMSAVLSTHSLFGTLMEGIFGYQEAPS). A helical transmembrane segment spans residues 245–265 (VSEVAVWFIYLIPALVAFALP). The Cytoplasmic segment spans residues 266-276 (PRAGATASRSA).

This sequence belongs to the oxidase-dependent Fe transporter (OFeT) (TC 9.A.10.1) family. In terms of assembly, part of a ferrous iron transporter composed of EfeU, EfeO and EfeB.

It is found in the cell inner membrane. Uptake of Fe(2+) ions across the membrane. This is Ferrous iron permease EfeU (efeU) from Escherichia coli O157:H7.